The following is a 223-amino-acid chain: Putative UPF0607 protein LOC392364 (223 aa).

Residues 110–138 (KMEVRAEEPKEATEVKDQVETQEQEDNKR) show a composition bias toward basic and acidic residues. The disordered stretch occupies residues 110-223 (KMEVRAEEPK…GRTPPARQHG (114 aa)). 2 stretches are compositionally biased toward polar residues: residues 145-163 (EAAS…TSPR) and 174-186 (QLKS…QTDK).

It belongs to the UPF0607 family.

This Homo sapiens (Human) protein is Putative UPF0607 protein LOC392364.